A 1073-amino-acid polypeptide reads, in one-letter code: Semaphorin-6D (1073 aa).

An N-terminal signal peptide occupies residues 1-20; it reads MGFLLLWFCVLFLLVSRLRA. The Extracellular segment spans residues 21–662; that stretch reads VSFPEDDEPL…GESNQMVHMN (642 aa). The Sema domain occupies 27-512; sequence DEPLNTVDYH…FSSCVVRIPL (486 aa). The N-linked (GlcNAc...) asparagine glycan is linked to N51. Intrachain disulfides connect C108–C118, C136–C145, C259–C370, and C284–C329. An N-linked (GlcNAc...) asparagine glycan is attached at N283. N-linked (GlcNAc...) asparagine glycosylation is found at N435 and N461. 4 disulfides stabilise this stretch: C477/C506, C515/C533, C521/C568, and C525/C541. One can recognise a PSI domain in the interval 514–569; it reads RCERYGSCKKSCIASRDPYCGWLSQGVCERVTLGMLPGGYEQDTEYGNTAHLGDCH. N631 carries N-linked (GlcNAc...) asparagine glycosylation. A helical membrane pass occupies residues 663–683; that stretch reads VLITCVFAAFVLGAFIAGVAV. The Cytoplasmic portion of the chain corresponds to 684 to 1073; that stretch reads YCYRDMFVRK…SVRPLNKYTY (390 aa). Phosphoserine is present on residues S723, S734, and S744. Disordered stretches follow at residues 745–825, 839–876, 919–986, and 1021–1073; these read RKEL…GHIP, TSFSNSNAHKAEKKLQSMDHPLTKSSSKREHRRSVDSR, PPKV…SPNG, and LQPS…KYTY. Residue T773 is modified to Phosphothreonine. Positions 790-806 are enriched in basic and acidic residues; that stretch reads SHSEKAHSHGASRKEHP. Phosphoserine occurs at positions 931, 957, and 983. Positions 931–942 are enriched in polar residues; sequence SPPSTLPRNSPT. Polar residues-rich tracts occupy residues 1021–1037 and 1059–1073; these read LQPSLSRQSSYTSNGTL and VPQTTSVRPLNKYTY.

This sequence belongs to the semaphorin family. Expressed in brain and lung.

It localises to the cell membrane. In terms of biological role, shows growth cone collapsing activity on dorsal root ganglion (DRG) neurons in vitro. May be a stop signal for the DRG neurons in their target areas, and possibly also for other neurons. May also be involved in the maintenance and remodeling of neuronal connections. Ligand of TREM2 with PLXNA1 as coreceptor in dendritic cells, plays a role in the generation of immune responses and skeletal homeostasis. This Mus musculus (Mouse) protein is Semaphorin-6D (Sema6d).